The chain runs to 95 residues: Large ribosomal subunit protein uL23 (95 aa).

The protein belongs to the universal ribosomal protein uL23 family. As to quaternary structure, part of the 50S ribosomal subunit. Contacts protein L29, and trigger factor when it is bound to the ribosome.

In terms of biological role, one of the early assembly proteins it binds 23S rRNA. One of the proteins that surrounds the polypeptide exit tunnel on the outside of the ribosome. Forms the main docking site for trigger factor binding to the ribosome. The polypeptide is Large ribosomal subunit protein uL23 (Heliobacterium modesticaldum (strain ATCC 51547 / Ice1)).